Consider the following 185-residue polypeptide: Ribosome-recycling factor (185 aa).

This sequence belongs to the RRF family.

The protein localises to the cytoplasm. In terms of biological role, responsible for the release of ribosomes from messenger RNA at the termination of protein biosynthesis. May increase the efficiency of translation by recycling ribosomes from one round of translation to another. This Francisella philomiragia subsp. philomiragia (strain ATCC 25017 / CCUG 19701 / FSC 153 / O#319-036) protein is Ribosome-recycling factor.